The sequence spans 248 residues: uncharacterized protein (248 aa).

9 to 33 lines the NADP(+) pocket; it reads IITGASSGIGKATALLLAEKGAKLV. Ser141 is a binding site for substrate. Tyr154 acts as the Proton acceptor in catalysis.

It belongs to the short-chain dehydrogenases/reductases (SDR) family.

This is an uncharacterized protein from Listeria monocytogenes serovar 1/2a (strain ATCC BAA-679 / EGD-e).